The sequence spans 419 residues: DNA ligase (419 aa).

The interval 1-120 is NTD; the sequence is MLSQFPGQCS…ARQKRGAHTN (120 aa). Residues 121 to 317 form an AD domain region; sequence RGMIPPMLVK…NYHSPHLAKL (197 aa). Positions 149, 151, 203, and 232 each coordinate ATP. Residue Lys-151 is the N6-AMP-lysine intermediate of the active site. Glu-203 is a binding site for a divalent metal cation. Glu-291 is an a divalent metal cation binding site. 2 residues coordinate ATP: Ile-294 and Lys-316. Positions 318 to 419 are OB domain; the sequence is KPLLDAEFIL…REPINVLEII (102 aa).

This sequence belongs to the ATP-dependent DNA ligase family. A divalent metal cation is required as a cofactor.

It localises to the virion. It catalyses the reaction ATP + (deoxyribonucleotide)n-3'-hydroxyl + 5'-phospho-(deoxyribonucleotide)m = (deoxyribonucleotide)n+m + AMP + diphosphate.. Very low-fidelity DNA ligase that seals nicks in double-stranded DNA during DNA repair. Together with the viral repair DNA polymerase X, fills the single nucleotide gaps generated by the AP endonuclease. It is not essential for viral replication and recombination. Displays a very low adenylation activity towards DNA with 3'-dideoxy- or 3'-amino-terminated nicks compared to regular nick DNA. The chain is DNA ligase (LIG) from Ornithodoros (relapsing fever ticks).